A 258-amino-acid chain; its full sequence is Trypsin (258 aa).

Residues 1–16 (MIRFTLALAVIGVTFA) form the signal peptide. The propeptide at 17 to 29 (ASTPQIETNPNLE) is activation peptide. Residues 30–257 (IIGGHDANII…FRDWINEETE (228 aa)) form the Peptidase S1 domain. A disulfide bond links Cys-55 and Cys-71. The active-site Charge relay system is the His-70. Asn-110 carries an N-linked (GlcNAc...) asparagine glycan. The Charge relay system role is filled by Asp-117. N-linked (GlcNAc...) asparagine glycans are attached at residues Asn-130 and Asn-188. Intrachain disulfides connect Cys-182/Cys-197 and Cys-209/Cys-233. Ser-213 acts as the Charge relay system in catalysis.

It belongs to the peptidase S1 family. Expressed in larval carcasses and gut, and adult gut.

It is found in the secreted. The catalysed reaction is Preferential cleavage: Arg-|-Xaa, Lys-|-Xaa.. The polypeptide is Trypsin (Phaedon cochleariae (Mustard beetle)).